A 133-amino-acid chain; its full sequence is Small ribosomal subunit protein uS8c (133 aa).

It belongs to the universal ribosomal protein uS8 family. In terms of assembly, part of the 30S ribosomal subunit.

Its subcellular location is the plastid. It is found in the chloroplast. One of the primary rRNA binding proteins, it binds directly to 16S rRNA central domain where it helps coordinate assembly of the platform of the 30S subunit. The protein is Small ribosomal subunit protein uS8c (rps8) of Pyropia yezoensis (Susabi-nori).